The sequence spans 144 residues: Large ribosomal subunit protein uL16 (144 aa).

It belongs to the universal ribosomal protein uL16 family. Part of the 50S ribosomal subunit.

In terms of biological role, binds 23S rRNA and is also seen to make contacts with the A and possibly P site tRNAs. This is Large ribosomal subunit protein uL16 from Clostridium beijerinckii (strain ATCC 51743 / NCIMB 8052) (Clostridium acetobutylicum).